The sequence spans 362 residues: Peptide chain release factor 1 (362 aa).

Residue glutamine 235 is modified to N5-methylglutamine.

This sequence belongs to the prokaryotic/mitochondrial release factor family. In terms of processing, methylated by PrmC. Methylation increases the termination efficiency of RF1.

It is found in the cytoplasm. Its function is as follows. Peptide chain release factor 1 directs the termination of translation in response to the peptide chain termination codons UAG and UAA. The chain is Peptide chain release factor 1 from Acinetobacter baylyi (strain ATCC 33305 / BD413 / ADP1).